Consider the following 244-residue polypeptide: Phosphoadenosine 5'-phosphosulfate reductase (244 aa).

Residue Cys-239 is the Nucleophile; cysteine thiosulfonate intermediate of the active site.

The protein belongs to the PAPS reductase family. CysH subfamily.

Its subcellular location is the cytoplasm. It carries out the reaction [thioredoxin]-disulfide + sulfite + adenosine 3',5'-bisphosphate + 2 H(+) = [thioredoxin]-dithiol + 3'-phosphoadenylyl sulfate. It participates in sulfur metabolism; hydrogen sulfide biosynthesis; sulfite from sulfate: step 3/3. Its function is as follows. Catalyzes the formation of sulfite from phosphoadenosine 5'-phosphosulfate (PAPS) using thioredoxin as an electron donor. In Buchnera aphidicola subsp. Acyrthosiphon pisum (strain Tuc7), this protein is Phosphoadenosine 5'-phosphosulfate reductase.